A 115-amino-acid chain; its full sequence is U3-lycotoxin-Ls1c (115 aa).

Residues 1 to 20 (MKFVLLFGVLLVTLFSYSSA) form the signal peptide. A propeptide spanning residues 21-44 (EMLDDFDQADEDELLSLIEKEEAR) is cleaved from the precursor. Cystine bridges form between Cys-48/Cys-63, Cys-55/Cys-72, Cys-62/Cys-87, and Cys-74/Cys-85.

Belongs to the neurotoxin 19 (CSTX) family. 01 subfamily. As to expression, expressed by the venom gland.

The protein resides in the secreted. The chain is U3-lycotoxin-Ls1c from Lycosa singoriensis (Wolf spider).